Reading from the N-terminus, the 827-residue chain is Putative transcriptional regulatory protein C16G5.16 (827 aa).

Positions 16-42 form a DNA-binding region, zn(2)-C6 fungal-type; the sequence is CDECHRRKIKCDQRRPCSNCIAYNYEC. 3 disordered regions span residues 80–114, 158–193, and 794–827; these read LKLPSFLAPPNDKDSPVNQSPWKRSDSSKRSSSQD, TVPNPVQESNSSSSQPDPLSFPYLPPTPAEDEHKKP, and QPPSMTNQVAYPTVRDGSNNSPDHPSSSNSKRTE. Residues 102–112 show a composition bias toward basic and acidic residues; the sequence is KRSDSSKRSSS. Residue serine 112 is modified to Phosphoserine. 2 stretches are compositionally biased toward low complexity: residues 159 to 179 and 811 to 827; these read VPNPVQESNSSSSQPDPLSFP and SNNSPDHPSSSNSKRTE.

It belongs to the ASG1 family.

The protein resides in the cytoplasm. The protein localises to the nucleus. The sequence is that of Putative transcriptional regulatory protein C16G5.16 from Schizosaccharomyces pombe (strain 972 / ATCC 24843) (Fission yeast).